Reading from the N-terminus, the 275-residue chain is Bis(5'-nucleosyl)-tetraphosphatase, symmetrical (275 aa).

This sequence belongs to the Ap4A hydrolase family.

The catalysed reaction is P(1),P(4)-bis(5'-adenosyl) tetraphosphate + H2O = 2 ADP + 2 H(+). In terms of biological role, hydrolyzes diadenosine 5',5'''-P1,P4-tetraphosphate to yield ADP. This chain is Bis(5'-nucleosyl)-tetraphosphatase, symmetrical, found in Hamiltonella defensa subsp. Acyrthosiphon pisum (strain 5AT).